The chain runs to 207 residues: Small ribosomal subunit protein uS4c (207 aa).

Residues 92 to 150 (MRLDNILFRLGFVPTIPSARQLINHRHILVNNRIVDVPSFHCKPKDIITIGSPKTYQSI) form the S4 RNA-binding domain.

This sequence belongs to the universal ribosomal protein uS4 family. In terms of assembly, part of the 30S ribosomal subunit. Contacts protein S5. The interaction surface between S4 and S5 is involved in control of translational fidelity.

The protein localises to the plastid. Its subcellular location is the chloroplast. Its function is as follows. One of the primary rRNA binding proteins, it binds directly to 16S rRNA where it nucleates assembly of the body of the 30S subunit. In terms of biological role, with S5 and S12 plays an important role in translational accuracy. The protein is Small ribosomal subunit protein uS4c (rps4) of Equisetum variegatum (Variegated horsetail).